We begin with the raw amino-acid sequence, 255 residues long: ATP synthase subunit a (255 aa).

Positions 1–7 (MMFNNII) are cleaved as a propeptide — removed in mature form. Helical transmembrane passes span 35-55 (FGFYIIISTIIILTLHLLITY), 91-111 (YFPFIYGLFIFILMNNLLGLI), 120-140 (HFILTFFISFTVVLGATILGF), 147-167 (FFSLFVPSGCPLGLLPLLVLI), 177-197 (VSLGLRLSANILSGHMLLVIL), and 208-228 (GIFYFLIGLIPLAFIFAFSGL).

This sequence belongs to the ATPase A chain family. As to quaternary structure, F-type ATPases have 2 components, CF(1) - the catalytic core - and CF(0) - the membrane proton channel. CF(1) has five subunits: alpha(3), beta(3), gamma(1), delta(1), epsilon(1). CF(0) has three main subunits: a, b and c.

Its subcellular location is the mitochondrion inner membrane. Mitochondrial membrane ATP synthase (F(1)F(0) ATP synthase or Complex V) produces ATP from ADP in the presence of a proton gradient across the membrane which is generated by electron transport complexes of the respiratory chain. F-type ATPases consist of two structural domains, F(1) - containing the extramembraneous catalytic core and F(0) - containing the membrane proton channel, linked together by a central stalk and a peripheral stalk. During catalysis, ATP synthesis in the catalytic domain of F(1) is coupled via a rotary mechanism of the central stalk subunits to proton translocation. Key component of the proton channel; it may play a direct role in the translocation of protons across the membrane. This is ATP synthase subunit a (ATP6) from Trichophyton rubrum (Athlete's foot fungus).